A 515-amino-acid polypeptide reads, in one-letter code: Maturase K (515 aa).

Belongs to the intron maturase 2 family. MatK subfamily.

The protein localises to the plastid. It localises to the chloroplast. Its function is as follows. Usually encoded in the trnK tRNA gene intron. Probably assists in splicing its own and other chloroplast group II introns. In Cedrus atlantica (Atlas cedar), this protein is Maturase K.